The sequence spans 126 residues: Adrenocorticotropic hormone receptor (126 aa).

The helical transmembrane segment at 1 to 25 threads the bilayer; the sequence is VLPEEIFFTISIVGVLENLIVLLAV. The Cytoplasmic portion of the chain corresponds to 26-34; the sequence is FKNKNLQAP. A helical membrane pass occupies residues 35–55; sequence MYFFICSLAISDMLGSLYKIL. The Extracellular portion of the chain corresponds to 56–80; that stretch reads ENILIILRNMGYLKPRGSFETTADD. Residues 81–102 traverse the membrane as a helical segment; it reads IIDSLFVLSLLGAIFSLSVIAA. The Cytoplasmic segment spans residues 103–123; it reads DRYITIFHALRYHSIVTMRRT. The helical transmembrane segment at 124–126 threads the bilayer; sequence VVV.

This sequence belongs to the G-protein coupled receptor 1 family. In terms of assembly, interacts with MRAP; increasing ligand-sensitivity and generation of cAMP. Interacts with MRAP2; competing with MRAP for binding to MC2R and impairing the binding of corticotropin (ACTH).

The protein resides in the cell membrane. Functionally, receptor for corticotropin (ACTH). This receptor is mediated by G proteins (G(s)) which activate adenylate cyclase (cAMP). The protein is Adrenocorticotropic hormone receptor (MC2R) of Papio hamadryas (Hamadryas baboon).